Here is an 818-residue protein sequence, read N- to C-terminus: Elongation factor G, mitochondrial (818 aa).

A mitochondrion-targeting transit peptide spans 1–23; it reads MFLGRAASRTCRHSQPLRVAARA. The tract at residues 67 to 96 is disordered; the sequence is MASTATATKPTEEASSSDQPPAPAHKLTDN. Polar residues predominate over residues 69-85; it reads STATATKPTEEASSSDQ. Residues 102 to 390 form the tr-type G domain; the sequence is TFQRNIGISA…GVCEYLPNPS (289 aa). GTP-binding positions include 111–118, 188–192, and 242–245; these read AHIDSGKT, DTPGH, and NKMD.

It belongs to the TRAFAC class translation factor GTPase superfamily. Classic translation factor GTPase family. EF-G/EF-2 subfamily.

It is found in the mitochondrion. Its pathway is protein biosynthesis; polypeptide chain elongation. In terms of biological role, mitochondrial GTPase that catalyzes the GTP-dependent ribosomal translocation step during translation elongation. During this step, the ribosome changes from the pre-translocational (PRE) to the post-translocational (POST) state as the newly formed A-site-bound peptidyl-tRNA and P-site-bound deacylated tRNA move to the P and E sites, respectively. Catalyzes the coordinated movement of the two tRNA molecules, the mRNA and conformational changes in the ribosome. The polypeptide is Elongation factor G, mitochondrial (Coprinopsis cinerea (strain Okayama-7 / 130 / ATCC MYA-4618 / FGSC 9003) (Inky cap fungus)).